Here is a 377-residue protein sequence, read N- to C-terminus: Aquaporin-2 (377 aa).

At 1 to 14 (MAANKGINGGIKNH) the chain is on the cytoplasmic side. A helical membrane pass occupies residues 15–35 (FIAFLGEFVGTFLFLFFAYGG). The Extracellular portion of the chain corresponds to 36–56 (TQTANQTSQKNPSIVASPDIN). The N-linked (GlcNAc...) asparagine glycan is linked to asparagine 40. The helical transmembrane segment at 57 to 77 (QLLYIALIFGFSLTVNVWIFF) threads the bilayer. Over 78–87 (RVSGGLFNPA) the chain is Cytoplasmic. An NPA 1 motif is present at residues 85–87 (NPA). Residues 88–108 (VTIALCLVGVVGPVRSIFIFI) traverse the membrane as a helical segment. Over 109 to 144 (AQVVASIAAAAAVRGLLPGDTVLFSCALAPGTSIAQ) the chain is Extracellular. A helical membrane pass occupies residues 145–165 (GLFLEMFFTIELVFTILMLAA). Over 166–171 (EKTKVT) the chain is Cytoplasmic. Residues 172 to 192 (FVAPVGIGLSLFVAELMGVAW) traverse the membrane as a helical segment. The Extracellular portion of the chain corresponds to 193-215 (TGGALNPARAFGAEVIGGFRGYH). Positions 198 to 200 (NPA) match the NPA 2 motif. Residues 216-236 (WIYWLGPLMGAVLAAGFYKVI) traverse the membrane as a helical segment. The Cytoplasmic portion of the chain corresponds to 237–377 (KFLNYEQVNG…ANAQNRAKTP (141 aa)). Disordered stretches follow at residues 278–332 (LFQT…RENE) and 358–377 (RLSG…AKTP). Polar residues-rich tracts occupy residues 315-328 (PAQQ…ASTI) and 368-377 (ANAQNRAKTP).

Belongs to the MIP/aquaporin (TC 1.A.8) family.

The protein resides in the membrane. The enzyme catalyses H2O(in) = H2O(out). It carries out the reaction glycerol(in) = glycerol(out). Its function is as follows. Water channel required to facilitate the transport of water across membranes. Involved in conidiation. The polypeptide is Aquaporin-2 (Botryotinia fuckeliana (strain B05.10) (Noble rot fungus)).